Reading from the N-terminus, the 346-residue chain is UDP-N-acetylenolpyruvoylglucosamine reductase (346 aa).

Residues 22–194 form the FAD-binding PCMH-type domain; it reads GFDVRARFAC…TSVTFRLPKV (173 aa). The active site involves Arg170. The active-site Proton donor is Ser246. The active site involves Glu342.

The protein belongs to the MurB family. It depends on FAD as a cofactor.

Its subcellular location is the cytoplasm. The catalysed reaction is UDP-N-acetyl-alpha-D-muramate + NADP(+) = UDP-N-acetyl-3-O-(1-carboxyvinyl)-alpha-D-glucosamine + NADPH + H(+). It functions in the pathway cell wall biogenesis; peptidoglycan biosynthesis. Its function is as follows. Cell wall formation. This is UDP-N-acetylenolpyruvoylglucosamine reductase from Paraburkholderia xenovorans (strain LB400).